Consider the following 205-residue polypeptide: Large ribosomal subunit protein uL4 (205 aa).

The segment at 43 to 78 (ARAGTKAQKTRSEVAGGGKKPWRQKGTGNARAGTIR) is disordered.

This sequence belongs to the universal ribosomal protein uL4 family. In terms of assembly, part of the 50S ribosomal subunit.

Its function is as follows. One of the primary rRNA binding proteins, this protein initially binds near the 5'-end of the 23S rRNA. It is important during the early stages of 50S assembly. It makes multiple contacts with different domains of the 23S rRNA in the assembled 50S subunit and ribosome. Forms part of the polypeptide exit tunnel. The chain is Large ribosomal subunit protein uL4 from Halorhodospira halophila (strain DSM 244 / SL1) (Ectothiorhodospira halophila (strain DSM 244 / SL1)).